Here is a 572-residue protein sequence, read N- to C-terminus: Proline--tRNA ligase (572 aa).

Belongs to the class-II aminoacyl-tRNA synthetase family. ProS type 1 subfamily. As to quaternary structure, homodimer.

The protein localises to the cytoplasm. It catalyses the reaction tRNA(Pro) + L-proline + ATP = L-prolyl-tRNA(Pro) + AMP + diphosphate. In terms of biological role, catalyzes the attachment of proline to tRNA(Pro) in a two-step reaction: proline is first activated by ATP to form Pro-AMP and then transferred to the acceptor end of tRNA(Pro). As ProRS can inadvertently accommodate and process non-cognate amino acids such as alanine and cysteine, to avoid such errors it has two additional distinct editing activities against alanine. One activity is designated as 'pretransfer' editing and involves the tRNA(Pro)-independent hydrolysis of activated Ala-AMP. The other activity is designated 'posttransfer' editing and involves deacylation of mischarged Ala-tRNA(Pro). The misacylated Cys-tRNA(Pro) is not edited by ProRS. The protein is Proline--tRNA ligase of Dichelobacter nodosus (strain VCS1703A).